A 676-amino-acid polypeptide reads, in one-letter code: Beta-taxilin (676 aa).

2 disordered regions span residues 1–55 (MEND…DISE) and 71–131 (AASL…EQKL). 2 stretches are compositionally biased toward polar residues: residues 8–25 (EKQQ…QGQS) and 34–45 (QPLSPTNQTSAQ). The span at 75-92 (VEKEGTTAETDKPEKEDV) shows a compositional bias: basic and acidic residues. Over residues 93–105 (GSMEDAECEDVNE) the composition is skewed to acidic residues. The segment covering 106 to 131 (ESEKDKPAPGDASRAKEPSASKEQKL) has biased composition (basic and acidic residues). Residues 157-461 (EEKLDLLFKK…LYRKIKQAQL (305 aa)) adopt a coiled-coil conformation. Residues 464–486 (EVNGNDILEEDDDANTNPSSSEQ) form a disordered region.

This sequence belongs to the taxilin family. In terms of tissue distribution, specifically expressed in skeletal and cardiac muscle.

Its subcellular location is the cytoplasm. In terms of biological role, promotes neurite-outgrowth. May be involved in intracellular vesicle traffic. The sequence is that of Beta-taxilin (TXLNB) from Gallus gallus (Chicken).